A 564-amino-acid polypeptide reads, in one-letter code: Dihydropyrimidinase-related protein 5 (564 aa).

Residues Thr-509 and Thr-514 each carry the phosphothreonine modification. Ser-532 and Ser-538 each carry phosphoserine. Arg-559 bears the Omega-N-methylarginine mark.

Belongs to the metallo-dependent hydrolases superfamily. Hydantoinase/dihydropyrimidinase family. Homotetramer, and heterotetramer with other DPYS-like proteins. Interacts with DPYSL2, DPYSL3 and DPYSL4. Interacts with MAP2 and TUBB3.

The protein resides in the cytoplasm. Its function is as follows. Involved in the negative regulation of dendrite outgrowth. The chain is Dihydropyrimidinase-related protein 5 (DPYSL5) from Homo sapiens (Human).